A 379-amino-acid chain; its full sequence is Ribosomal RNA large subunit methyltransferase G (379 aa).

The protein belongs to the methyltransferase superfamily. RlmG family.

The protein resides in the cytoplasm. The catalysed reaction is guanosine(1835) in 23S rRNA + S-adenosyl-L-methionine = N(2)-methylguanosine(1835) in 23S rRNA + S-adenosyl-L-homocysteine + H(+). Functionally, specifically methylates the guanine in position 1835 (m2G1835) of 23S rRNA. This Serratia proteamaculans (strain 568) protein is Ribosomal RNA large subunit methyltransferase G.